A 559-amino-acid polypeptide reads, in one-letter code: Methionine--tRNA ligase (559 aa).

The 'HIGH' region signature appears at 10–20 (PYINAVPHLGT). Residues Cys-141, Cys-144, Cys-154, and Cys-157 each coordinate Zn(2+). Residues 331 to 335 (KFSKS) carry the 'KMSKS' region motif. Lys-334 provides a ligand contact to ATP.

The protein belongs to the class-I aminoacyl-tRNA synthetase family. MetG type 1 subfamily. Requires Zn(2+) as cofactor.

The protein resides in the cytoplasm. The enzyme catalyses tRNA(Met) + L-methionine + ATP = L-methionyl-tRNA(Met) + AMP + diphosphate. Its function is as follows. Is required not only for elongation of protein synthesis but also for the initiation of all mRNA translation through initiator tRNA(fMet) aminoacylation. This Korarchaeum cryptofilum (strain OPF8) protein is Methionine--tRNA ligase.